A 230-amino-acid chain; its full sequence is 2,3-bisphosphoglycerate-dependent phosphoglycerate mutase (230 aa).

Residues 8-15 (RHGQSEWN), 21-22 (TG), Arg60, 87-90 (ERHY), Lys98, 114-115 (RR), and 183-184 (GN) contribute to the substrate site. Residue His9 is the Tele-phosphohistidine intermediate of the active site. Catalysis depends on Glu87, which acts as the Proton donor/acceptor.

The protein belongs to the phosphoglycerate mutase family. BPG-dependent PGAM subfamily.

The catalysed reaction is (2R)-2-phosphoglycerate = (2R)-3-phosphoglycerate. It functions in the pathway carbohydrate degradation; glycolysis; pyruvate from D-glyceraldehyde 3-phosphate: step 3/5. In terms of biological role, catalyzes the interconversion of 2-phosphoglycerate and 3-phosphoglycerate. This chain is 2,3-bisphosphoglycerate-dependent phosphoglycerate mutase, found in Lactobacillus acidophilus (strain ATCC 700396 / NCK56 / N2 / NCFM).